Here is a 338-residue protein sequence, read N- to C-terminus: E3 ubiquitin-protein ligase RING1 (338 aa).

The disordered stretch occupies residues 102 to 124 (TTTSSSASIDPNNPSLSGPTRSG). Residues 110–121 (IDPNNPSLSGPT) are compositionally biased toward polar residues. The RING-type; atypical zinc finger occupies 224–265 (CAVCMDDFEEGTEAKQMPCKHLYHKDCLLPWLELHNSCPVCR). Composition is skewed to basic and acidic residues over residues 267–279 (ELPT…ERRV) and 298–309 (SDGDNRTVERSF). Residues 267 to 338 (ELPTDDPDYE…NAETRQEDLD (72 aa)) are disordered.

In terms of processing, auto-ubiquitinated as part of the enzymatic reaction. In terms of tissue distribution, mostly expressed in cotton fibers, and, to a lower extent, in leaves and flowers.

The enzyme catalyses S-ubiquitinyl-[E2 ubiquitin-conjugating enzyme]-L-cysteine + [acceptor protein]-L-lysine = [E2 ubiquitin-conjugating enzyme]-L-cysteine + N(6)-ubiquitinyl-[acceptor protein]-L-lysine.. It functions in the pathway protein modification; protein ubiquitination. E3 ubiquitin-protein ligase which accepts ubiquitin from an E2 ubiquitin-conjugating enzyme in the form of a thioester and then directly transfers the ubiquitin to targeted substrates. Promotes polyubiquitination of target proteins. The sequence is that of E3 ubiquitin-protein ligase RING1 (RING1) from Gossypium hirsutum (Upland cotton).